We begin with the raw amino-acid sequence, 545 residues long: MAKDIYFNEDARKSLLSGVEKLSNAVKVTLGPKGRNVLIDKKFGSPTVTKDGVSVAREIELENPFENMGAQLLKEVAIKTNDVAGDGTTTATVLAYAIAREGLKNVSSGINPIGIKKGIDHAVNLAAEKIRQSAKKITTKEEIAQVASISANNDSYIGEKIAEAMDKVGKDGVITVEESKTFDTTISYVEGMQFDRGYLSPYFSTNKENMSVNFDDAFILIYEKKISSIKELLPVLEKVLGTNKPLLIIAEDIEGDALAALVLNSVRGALKVCAIKSPGFGDRRKAMLEDIAVLTGGVLISEELGLTLETVEIEQLGQAKTIKVDKDNTTIINTGNKEQIKERSELIKKQIEDSTSEYDKEKLQERLAKLVGGVAVINVGAVTEVELKEKKHRVEDALSATRAAVEEGVVPGGGSTLIEVAMYLDTIDTSKLSYEEKQGFEIVKRSLEEPMRQIISNAGFEGSIYIHQIKTEKKGLGFDASSFKWVNMIESGIIDPAKVTRSALQNAASIAGLLLTTECAITDIKEEKNTSGGGGYPMDPGMGMM.

Residues 29–32 (TLGP), Lys50, 86–90 (DGTTT), Gly413, and Asp495 each bind ATP.

This sequence belongs to the chaperonin (HSP60) family. Forms a cylinder of 14 subunits composed of two heptameric rings stacked back-to-back. Interacts with the co-chaperonin GroES.

It is found in the cytoplasm. The enzyme catalyses ATP + H2O + a folded polypeptide = ADP + phosphate + an unfolded polypeptide.. Together with its co-chaperonin GroES, plays an essential role in assisting protein folding. The GroEL-GroES system forms a nano-cage that allows encapsulation of the non-native substrate proteins and provides a physical environment optimized to promote and accelerate protein folding. The sequence is that of Chaperonin GroEL from Borreliella burgdorferi (strain ATCC 35210 / DSM 4680 / CIP 102532 / B31) (Borrelia burgdorferi).